The sequence spans 860 residues: Beta-glucosidase 1 (860 aa).

The signal sequence occupies residues 1–19 (MKLSWLEAAALTAASVVSA). 3 N-linked (GlcNAc...) asparagine glycosylation sites follow: asparagine 61, asparagine 211, and asparagine 252. Aspartate 280 is a catalytic residue. Asparagine 315, asparagine 322, asparagine 354, asparagine 387, asparagine 442, asparagine 523, asparagine 542, asparagine 564, asparagine 658, asparagine 668, asparagine 690, and asparagine 712 each carry an N-linked (GlcNAc...) asparagine glycan.

Belongs to the glycosyl hydrolase 3 family.

It carries out the reaction Hydrolysis of terminal, non-reducing beta-D-glucosyl residues with release of beta-D-glucose.. The protein operates within glycan metabolism; cellulose degradation. In Aspergillus aculeatus, this protein is Beta-glucosidase 1.